Here is a 101-residue protein sequence, read N- to C-terminus: Ascorbate-specific PTS system EIIB component (101 aa).

The PTS EIIB type-2 domain maps to 3 to 96 (VRILAVCGNG…KLLEVIKAHF (94 aa)). Cysteine 9 acts as the Phosphocysteine intermediate in catalysis. Cysteine 9 bears the Phosphocysteine mark.

The protein localises to the cytoplasm. The catalysed reaction is N(pros)-phospho-L-histidyl-[protein] + L-ascorbate(out) = L-ascorbate 6-phosphate(in) + L-histidyl-[protein]. In terms of biological role, the phosphoenolpyruvate-dependent sugar phosphotransferase system (sugar PTS), a major carbohydrate active transport system, catalyzes the phosphorylation of incoming sugar substrates concomitantly with their translocation across the cell membrane. The enzyme II UlaABC PTS system is involved in ascorbate transport. The protein is Ascorbate-specific PTS system EIIB component (ulaB) of Shigella sonnei (strain Ss046).